The following is a 78-amino-acid chain: Large ribosomal subunit protein bL28 (78 aa).

Positions 1 to 21 (MSRVCQVTGKKPMVGNNRSHA) are disordered.

The protein belongs to the bacterial ribosomal protein bL28 family.

The chain is Large ribosomal subunit protein bL28 from Shewanella woodyi (strain ATCC 51908 / MS32).